A 354-amino-acid chain; its full sequence is Methionine import ATP-binding protein MetN (354 aa).

One can recognise an ABC transporter domain in the interval 8–250; that stretch reads LDHIDITFRQ…PKEALTQKFI (243 aa). ATP is bound at residue 42 to 49; sequence GYSGAGKS.

It belongs to the ABC transporter superfamily. Methionine importer (TC 3.A.1.24) family. As to quaternary structure, the complex is composed of two ATP-binding proteins (MetN), two transmembrane proteins (MetI) and a solute-binding protein (MetQ).

The protein resides in the cell membrane. It carries out the reaction L-methionine(out) + ATP + H2O = L-methionine(in) + ADP + phosphate + H(+). The catalysed reaction is D-methionine(out) + ATP + H2O = D-methionine(in) + ADP + phosphate + H(+). Functionally, part of the ABC transporter complex MetNIQ involved in methionine import. Responsible for energy coupling to the transport system. The chain is Methionine import ATP-binding protein MetN from Streptococcus pyogenes serotype M6 (strain ATCC BAA-946 / MGAS10394).